The chain runs to 398 residues: MAKLTVKDVDLKGKKVLVRVDFNVPLKDGVITNDNRITAALPTIKYIIEQGGRAILFSHLGRVKEEADKAGKSLAPVAADLAAKLGQDVVFPGVTRGAELEAAINALEDGQVLLVENTRYEDVDGKKESKNDPELGKYWASLGDGIFVNDAFGTAHRAHASNVGISANVEKAVAGFLLENEIAYIQEAVETPERPFVAILGGSKVSDKIGVIENLLEKADKVLIGGGMTYTFYKAQGIEIGNSLVEEDKLDVAKALLEKANGKLILPVDSKEANAFAGYTEVRDTEGEAVSEGFLGLDIGPKSIAKFDEALTGAKTVVWNGPMGVFENPDFQTGTIGVMDAIVKQPGVKSIIGGGDSAAAAINLGRADKFSWISTGGGASMELLEGKVLPGLAALTEK.

Substrate is bound by residues 21–23 (DFN), Arg-36, 59–62 (HLGR), Arg-119, and Arg-157. Residues Lys-208, Gly-296, Glu-327, and 354 to 357 (GGDS) each bind ATP.

This sequence belongs to the phosphoglycerate kinase family. As to quaternary structure, monomer.

It localises to the cytoplasm. The catalysed reaction is (2R)-3-phosphoglycerate + ATP = (2R)-3-phospho-glyceroyl phosphate + ADP. It functions in the pathway carbohydrate degradation; glycolysis; pyruvate from D-glyceraldehyde 3-phosphate: step 2/5. This is Phosphoglycerate kinase from Streptococcus pneumoniae (strain 70585).